Reading from the N-terminus, the 305-residue chain is Oxygen-dependent coproporphyrinogen-III oxidase (305 aa).

S93 is a substrate binding site. H97 and H107 together coordinate a divalent metal cation. The active-site Proton donor is the H107. Position 109–111 (109–111 (NVR)) interacts with substrate. The a divalent metal cation site is built by H146 and H176. The important for dimerization stretch occupies residues 241–276 (YVEFNLVYDRGTLFGLQSGGRTESILMSLPPQVRWG). 259 to 261 (GGR) lines the substrate pocket.

It belongs to the aerobic coproporphyrinogen-III oxidase family. Homodimer. A divalent metal cation is required as a cofactor.

The protein localises to the cytoplasm. The enzyme catalyses coproporphyrinogen III + O2 + 2 H(+) = protoporphyrinogen IX + 2 CO2 + 2 H2O. The protein operates within porphyrin-containing compound metabolism; protoporphyrin-IX biosynthesis; protoporphyrinogen-IX from coproporphyrinogen-III (O2 route): step 1/1. Functionally, involved in the heme biosynthesis. Catalyzes the aerobic oxidative decarboxylation of propionate groups of rings A and B of coproporphyrinogen-III to yield the vinyl groups in protoporphyrinogen-IX. The sequence is that of Oxygen-dependent coproporphyrinogen-III oxidase from Pseudomonas fluorescens (strain ATCC BAA-477 / NRRL B-23932 / Pf-5).